Reading from the N-terminus, the 271-residue chain is MDNFMEMTKKLGHQPELLRLRALDATYDDALEGKLVVAPLDMSEPGKKILDSGTADGTWLRNVRSKQSVPHDYYGSDVEGELFPKDPDGITYFAHSFKDPWPQQYLGFFDLVHIRGSLAGSAPEGPAPVIQNLTTLLKPGGWVQLMEMNAFSPPPNGPAMTDFAKMASEMFTGIGVGDFANNNKSMLEDAGLKNVQEKRVIVNLGKKAKPELHDQSIHGVTGPIVPLTSVARTVKSSFTGEQLDALPARVKEELETEGGQVEMIIAFGQKA.

It belongs to the methyltransferase superfamily. LaeA methyltransferase family.

It participates in secondary metabolite biosynthesis. Functionally, methyltransferase; part of the gene cluster that mediates the biosynthesis of pseurotin A, a competitive inhibitor of chitin synthase and an inducer of nerve-cell proliferation. The PKS-NRPS hybrid synthetase psoA is responsible for the biosynthesis of azaspirene, one of the first intermediates having the 1-oxa-7-azaspiro[4,4]-non-2-ene-4,6-dione core of pseurotin, via condensation of one acetyl-CoA, 4 malonyl-CoA, and a L-phenylalanine molecule. The dual-functional monooxygenase/methyltransferase psoF seems to be involved in the addition of the C3 methyl group onto the pseurotin scaffold. Azaspirene is then converted to synerazol through 4 steps including oxidation of C17 by the cytochrome P450 monooxygenase psoD, O-methylation of the hydroxy group of C8 by the methyltransferase psoC, and the trans-to-cis isomerization of the C13 olefin by the glutathione S-transferase psoE. The fourth step of synerazol production is performed by the dual-functional monooxygenase/methyltransferase psoF which seems to catalyze the epoxidation of the intermediate deepoxy-synerazol. Synerazol can be attacked by a water molecule nonenzymatically at two different positions to yield two diol products, pseurotin A and pseurotin D. This Aspergillus fumigatus (strain ATCC MYA-4609 / CBS 101355 / FGSC A1100 / Af293) (Neosartorya fumigata) protein is Methyltransferase psoC.